Here is a 702-residue protein sequence, read N- to C-terminus: Elongation factor G 2 (702 aa).

One can recognise a tr-type G domain in the interval 8–291 (ELYRNIGIVA…AVIDYLPAPS (284 aa)). Residues 17–24 (AHVDAGKT), 89–93 (DTPGH), and 143–146 (NKMD) contribute to the GTP site. The segment at 293–314 (IPAIRGTDPDDEEKHDERHADD) is disordered.

It belongs to the TRAFAC class translation factor GTPase superfamily. Classic translation factor GTPase family. EF-G/EF-2 subfamily.

It localises to the cytoplasm. In terms of biological role, catalyzes the GTP-dependent ribosomal translocation step during translation elongation. During this step, the ribosome changes from the pre-translocational (PRE) to the post-translocational (POST) state as the newly formed A-site-bound peptidyl-tRNA and P-site-bound deacylated tRNA move to the P and E sites, respectively. Catalyzes the coordinated movement of the two tRNA molecules, the mRNA and conformational changes in the ribosome. This is Elongation factor G 2 (fusB) from Pseudomonas aeruginosa (strain ATCC 15692 / DSM 22644 / CIP 104116 / JCM 14847 / LMG 12228 / 1C / PRS 101 / PAO1).